The sequence spans 1006 residues: Unconventional myosin-Id (1006 aa).

At Ala-2 the chain carries N-acetylalanine. The region spanning Phe-9–Ala-695 is the Myosin motor domain. Gly-102–Thr-109 lines the ATP pocket. The residue at position 200 (Ser-200) is a Phosphoserine. Residue Tyr-536 is modified to Phosphotyrosine. Positions Met-572 to Asp-594 are actin-binding. IQ domains are found at residues Val-699 to Lys-719 and Thr-721 to His-741. A TH1 domain is found at Gly-812–Gly-1005.

This sequence belongs to the TRAFAC class myosin-kinesin ATPase superfamily. Myosin family. In terms of assembly, interacts (via the two IQ motifs) with calmodulin. Binds an additional calmodulin chain via a third, C-terminal region. Interacts with F-actin.

It is found in the cytoplasm. The protein localises to the perikaryon. Its subcellular location is the cell projection. The protein resides in the dendrite. It localises to the early endosome. It is found in the cell cortex. In terms of biological role, unconventional myosin that functions as actin-based motor protein with ATPase activity. Plays a role in endosomal protein trafficking, and especially in the transfer of cargo proteins from early to recycling endosomes. Required for normal planar cell polarity in ciliated tracheal cells, for normal rotational polarity of cilia, and for coordinated, unidirectional ciliary movement in the trachea. Required for normal, polarized cilia organization in brain ependymal epithelial cells. This Bos taurus (Bovine) protein is Unconventional myosin-Id (MYO1D).